A 541-amino-acid chain; its full sequence is Membrane protein insertase YidC (541 aa).

Helical transmembrane passes span 6-26, 356-376, 430-450, 463-483, and 498-518; these read FFLI…WEIT, IIHS…LAFY, LPIL…LEMV, LSAP…MFIQ, and IMMA…SGLV.

Belongs to the OXA1/ALB3/YidC family. Type 1 subfamily. Interacts with the Sec translocase complex via SecD. Specifically interacts with transmembrane segments of nascent integral membrane proteins during membrane integration.

It is found in the cell inner membrane. Its function is as follows. Required for the insertion and/or proper folding and/or complex formation of integral membrane proteins into the membrane. Involved in integration of membrane proteins that insert both dependently and independently of the Sec translocase complex, as well as at least some lipoproteins. Aids folding of multispanning membrane proteins. This Vesicomyosocius okutanii subsp. Calyptogena okutanii (strain HA) protein is Membrane protein insertase YidC.